Reading from the N-terminus, the 359-residue chain is Alanine racemase, biosynthetic (359 aa).

K34 acts as the Proton acceptor; specific for D-alanine in catalysis. N6-(pyridoxal phosphate)lysine is present on K34. R129 is a binding site for substrate. Catalysis depends on Y255, which acts as the Proton acceptor; specific for L-alanine. M303 is a substrate binding site.

The protein belongs to the alanine racemase family. Pyridoxal 5'-phosphate serves as cofactor.

The catalysed reaction is L-alanine = D-alanine. It functions in the pathway amino-acid biosynthesis; D-alanine biosynthesis; D-alanine from L-alanine: step 1/1. The protein operates within cell wall biogenesis; peptidoglycan biosynthesis. Functionally, catalyzes the interconversion of L-alanine and D-alanine. Provides the D-alanine required for cell wall biosynthesis. The polypeptide is Alanine racemase, biosynthetic (alr) (Escherichia coli O6:H1 (strain CFT073 / ATCC 700928 / UPEC)).